The following is a 33-amino-acid chain: Neutrophil defensin 4 (33 aa).

3 disulfides stabilise this stretch: Cys3–Cys31, Cys5–Cys20, and Cys10–Cys30.

The protein belongs to the alpha-defensin family. HANP-2 could be a product of proteolytic N-terminal amino acid removal from HANP-4.

The protein localises to the secreted. In terms of biological role, bactericidal activity, greater against Gram-positive bacteria. Low anti-fungi activity. The polypeptide is Neutrophil defensin 4 (Mesocricetus auratus (Golden hamster)).